The following is a 914-amino-acid chain: Probable dipeptidyl-aminopeptidase B (914 aa).

A compositionally biased stretch (acidic residues) spans 1–10 (MGKSEADEDA). The disordered stretch occupies residues 1-81 (MGKSEADEDA…DQPFLPSRKG (81 aa)). The Cytoplasmic segment spans residues 1–89 (MGKSEADEDA…KGSGARARRV (89 aa)). The segment covering 20–34 (SSSAASQTSSDSGLS) has biased composition (low complexity). A helical; Signal-anchor for type II membrane protein membrane pass occupies residues 90 to 110 (FWGLLLLCLAGWVLAFVLFLI). Topologically, residues 111 to 914 (QGRSGYSATS…FKRALPVFVH (804 aa)) are vacuolar. N-linked (GlcNAc...) asparagine glycans are attached at residues Asn-347 and Asn-638. Residue Ser-752 is the Charge relay system of the active site. Asn-806 is a glycosylation site (N-linked (GlcNAc...) asparagine). Catalysis depends on charge relay system residues Asp-829 and His-862.

The protein belongs to the peptidase S9B family.

The protein resides in the vacuole membrane. The enzyme catalyses Release of an N-terminal dipeptide, Xaa-Yaa-|-Zaa-, from a polypeptide, preferentially when Yaa is Pro, provided Zaa is neither Pro nor hydroxyproline.. Functionally, type IV dipeptidyl-peptidase which removes N-terminal dipeptides sequentially from polypeptides having unsubstituted N-termini provided that the penultimate residue is proline. The polypeptide is Probable dipeptidyl-aminopeptidase B (dapB) (Aspergillus terreus (strain NIH 2624 / FGSC A1156)).